Here is an 840-residue protein sequence, read N- to C-terminus: Protein translocase subunit SecA (840 aa).

ATP-binding positions include Gln89, 107-111 (GEGKT), and Asp514.

The protein belongs to the SecA family. Monomer and homodimer. Part of the essential Sec protein translocation apparatus which comprises SecA, SecYEG and auxiliary proteins SecDF-YajC and YidC.

It localises to the cell inner membrane. Its subcellular location is the cytoplasm. It carries out the reaction ATP + H2O + cellular proteinSide 1 = ADP + phosphate + cellular proteinSide 2.. In terms of biological role, part of the Sec protein translocase complex. Interacts with the SecYEG preprotein conducting channel. Has a central role in coupling the hydrolysis of ATP to the transfer of proteins into and across the cell membrane, serving as an ATP-driven molecular motor driving the stepwise translocation of polypeptide chains across the membrane. This is Protein translocase subunit SecA from Blochmanniella floridana.